The primary structure comprises 227 residues: Ribonuclease 3 (227 aa).

Positions 4–126 (LDRLERKIGY…IIGAMSLDQG (123 aa)) constitute an RNase III domain. E39 is a Mg(2+) binding site. The active site involves D43. Residues D112 and E115 each contribute to the Mg(2+) site. E115 is a catalytic residue. The 74-residue stretch at 153-226 (DAKTRLQEYL…AEQILKELDI (74 aa)) folds into the DRBM domain.

This sequence belongs to the ribonuclease III family. In terms of assembly, homodimer. Mg(2+) serves as cofactor.

The protein resides in the cytoplasm. The catalysed reaction is Endonucleolytic cleavage to 5'-phosphomonoester.. Functionally, digests double-stranded RNA. Involved in the processing of primary rRNA transcript to yield the immediate precursors to the large and small rRNAs (23S and 16S). Processes some mRNAs, and tRNAs when they are encoded in the rRNA operon. Processes pre-crRNA and tracrRNA of type II CRISPR loci if present in the organism. The sequence is that of Ribonuclease 3 from Haemophilus influenzae (strain PittGG).